We begin with the raw amino-acid sequence, 556 residues long: Formate--tetrahydrofolate ligase 1 (556 aa).

65-72 (TPAGEGKS) lines the ATP pocket.

Belongs to the formate--tetrahydrofolate ligase family.

The catalysed reaction is (6S)-5,6,7,8-tetrahydrofolate + formate + ATP = (6R)-10-formyltetrahydrofolate + ADP + phosphate. Its pathway is one-carbon metabolism; tetrahydrofolate interconversion. This Streptococcus pyogenes serotype M1 protein is Formate--tetrahydrofolate ligase 1.